The primary structure comprises 302 residues: Phosphatidylglycerol--prolipoprotein diacylglyceryl transferase (302 aa).

7 consecutive transmembrane segments (helical) span residues 19-39, 67-87, 108-128, 143-163, 203-223, 232-252, and 264-284; these read FGPLALRWYALAYVAGILLGW, LVLWITLGIIVGGRLGYFVFY, IWEGGMSFHGGFLGVCAAIIL, LIAPVAPIGIFFGRIANFING, QLYEAALEGLVLFLILAFAIY, GALVATFLLGYGLARLALENV, and LGLTMGMMLSIPMILAGGWLL. An a 1,2-diacyl-sn-glycero-3-phospho-(1'-sn-glycerol)-binding site is contributed by arginine 156.

This sequence belongs to the Lgt family.

Its subcellular location is the cell inner membrane. It carries out the reaction L-cysteinyl-[prolipoprotein] + a 1,2-diacyl-sn-glycero-3-phospho-(1'-sn-glycerol) = an S-1,2-diacyl-sn-glyceryl-L-cysteinyl-[prolipoprotein] + sn-glycerol 1-phosphate + H(+). It functions in the pathway protein modification; lipoprotein biosynthesis (diacylglyceryl transfer). Its function is as follows. Catalyzes the transfer of the diacylglyceryl group from phosphatidylglycerol to the sulfhydryl group of the N-terminal cysteine of a prolipoprotein, the first step in the formation of mature lipoproteins. This is Phosphatidylglycerol--prolipoprotein diacylglyceryl transferase from Caulobacter vibrioides (strain ATCC 19089 / CIP 103742 / CB 15) (Caulobacter crescentus).